The chain runs to 228 residues: UPF0173 metal-dependent hydrolase LMOf2365_1599 (228 aa).

This sequence belongs to the UPF0173 family.

The chain is UPF0173 metal-dependent hydrolase LMOf2365_1599 from Listeria monocytogenes serotype 4b (strain F2365).